The primary structure comprises 299 residues: MAKSLSITPVSGLSRLPWRAYLEMTKPKVVTLMLLTVLVGMCLALPGAVPLQPLIAGMLGIAMMAGAAAAMNHLIDRRIDGLMARTYNRPLPKGKVPVSHAATFAALLALLGFACLYWLVNPLTAWLTLASLLGYAVVYTAYLKRATPQNIVIGGLAGAMPPLLGWTAVTNDFHGHGLLLVIIIFAWTPPHFWALAIHRKADYAKVDIPMLPVTHGVAFTKTCIFLYTILLALACLLPVLVGMSGALYLLGSTLLSIGFIYKAWQLKYHETPGMAMDVFRFSIYHLMLLFILLLVDHYI.

A run of 9 helical transmembrane segments spans residues 29–49 (VVTL…PGAV), 51–71 (LQPL…AAAM), 100–120 (HAAT…YWLV), 123–143 (LTAW…TAYL), 150–170 (NIVI…TAVT), 177–197 (GLLL…ALAI), 223–243 (CIFL…LVGM), 244–264 (SGAL…YKAW), and 275–295 (AMDV…LLLV).

Belongs to the UbiA prenyltransferase family. Protoheme IX farnesyltransferase subfamily.

It localises to the cell inner membrane. It catalyses the reaction heme b + (2E,6E)-farnesyl diphosphate + H2O = Fe(II)-heme o + diphosphate. The protein operates within porphyrin-containing compound metabolism; heme O biosynthesis; heme O from protoheme: step 1/1. In terms of biological role, converts heme B (protoheme IX) to heme O by substitution of the vinyl group on carbon 2 of heme B porphyrin ring with a hydroxyethyl farnesyl side group. The sequence is that of Protoheme IX farnesyltransferase from Shewanella amazonensis (strain ATCC BAA-1098 / SB2B).